The primary structure comprises 270 residues: Glucosamine-6-phosphate deaminase (270 aa).

The active-site Proton acceptor; for enolization step is Asp-72. Asp-141 serves as the catalytic For ring-opening step. The Proton acceptor; for ring-opening step role is filled by His-143. Residue Glu-148 is the For ring-opening step of the active site.

This sequence belongs to the glucosamine/galactosamine-6-phosphate isomerase family. NagB subfamily.

The enzyme catalyses alpha-D-glucosamine 6-phosphate + H2O = beta-D-fructose 6-phosphate + NH4(+). The protein operates within amino-sugar metabolism; N-acetylneuraminate degradation; D-fructose 6-phosphate from N-acetylneuraminate: step 5/5. With respect to regulation, allosterically activated by N-acetylglucosamine 6-phosphate (GlcNAc6P). In terms of biological role, catalyzes the reversible isomerization-deamination of glucosamine 6-phosphate (GlcN6P) to form fructose 6-phosphate (Fru6P) and ammonium ion. This is Glucosamine-6-phosphate deaminase from Treponema denticola (strain ATCC 35405 / DSM 14222 / CIP 103919 / JCM 8153 / KCTC 15104).